The sequence spans 509 residues: Phosphoglycerate kinase, glycosomal (509 aa).

(2R)-3-phosphoglycerate-binding residues include V32, D33, F34, N35, R48, S70, H71, G73, R74, R224, H260, and R261. G306 serves as a coordination point for ADP. G306 lines the CDP pocket. K308 contacts (2R)-3-phosphoglycerate. K308 is an AMP binding site. D311 contributes to the CDP binding site. D311 contacts Mg(2+). ADP contacts are provided by K312 and G330. Position 312 (K312) interacts with AMP. K312 contributes to the ATP binding site. G330 contributes to the CDP binding site. Residues A331 and A403 each coordinate AMP. Residues A331 and A403 each coordinate ATP. 2 residues coordinate ADP: A403 and N427. G428 and F433 together coordinate CDP. ADP is bound by residues F433, E434, D466, and S467. Residue E434 coordinates AMP. Positions 434, 466, and 467 each coordinate ATP. D466 contributes to the Mg(2+) binding site.

It belongs to the phosphoglycerate kinase family. As to quaternary structure, monomer. Requires Mg(2+) as cofactor.

The protein localises to the glycosome. It carries out the reaction (2R)-3-phosphoglycerate + ATP = (2R)-3-phospho-glyceroyl phosphate + ADP. Its pathway is carbohydrate degradation; glycolysis; pyruvate from D-glyceraldehyde 3-phosphate: step 2/5. This chain is Phosphoglycerate kinase, glycosomal (56PGK), found in Trypanosoma congolense.